We begin with the raw amino-acid sequence, 378 residues long: tRNA (guanine(26)-N(2))-dimethyltransferase (378 aa).

The region spanning 4 to 374 (KEVTEGKVRI…KGYEEIIRCV (371 aa)) is the Trm1 methyltransferase domain. Residues R44, R69, D87, D114, and A115 each contribute to the S-adenosyl-L-methionine site. Zn(2+) is bound by residues C246, C249, C263, and C266.

The protein belongs to the class I-like SAM-binding methyltransferase superfamily. Trm1 family.

It catalyses the reaction guanosine(26) in tRNA + 2 S-adenosyl-L-methionine = N(2)-dimethylguanosine(26) in tRNA + 2 S-adenosyl-L-homocysteine + 2 H(+). Functionally, dimethylates a single guanine residue at position 26 of a number of tRNAs using S-adenosyl-L-methionine as donor of the methyl groups. In Saccharolobus islandicus (strain M.16.27) (Sulfolobus islandicus), this protein is tRNA (guanine(26)-N(2))-dimethyltransferase.